The sequence spans 211 residues: tRNA (guanine-N(7)-)-methyltransferase (211 aa).

Glu44, Asp69, Asp96, and Asp118 together coordinate S-adenosyl-L-methionine. The active site involves Asp118. Residue Lys122 coordinates substrate. Residues Arg124–Arg129 are interaction with RNA. Substrate contacts are provided by residues Asp154 and Thr191–Glu194.

It belongs to the class I-like SAM-binding methyltransferase superfamily. TrmB family.

The catalysed reaction is guanosine(46) in tRNA + S-adenosyl-L-methionine = N(7)-methylguanosine(46) in tRNA + S-adenosyl-L-homocysteine. Its pathway is tRNA modification; N(7)-methylguanine-tRNA biosynthesis. Its function is as follows. Catalyzes the formation of N(7)-methylguanine at position 46 (m7G46) in tRNA. The protein is tRNA (guanine-N(7)-)-methyltransferase of Streptococcus pneumoniae (strain CGSP14).